The chain runs to 547 residues: Ribosomal lysine N-methyltransferase set10 (547 aa).

Residues 17–235 (KSVEFIQSRD…KGNQLFNNYG (219 aa)) enclose the SET domain. Residue Tyr234 coordinates S-adenosyl-L-methionine.

It belongs to the class V-like SAM-binding methyltransferase superfamily. RKM1 family.

The protein localises to the cytoplasm. It localises to the nucleus. Functionally, S-adenosyl-L-methionine-dependent protein-lysine N-methyltransferase that methylates ribosomal protein L23 (rpl23a and rpl23b). The polypeptide is Ribosomal lysine N-methyltransferase set10 (set10) (Schizosaccharomyces pombe (strain 972 / ATCC 24843) (Fission yeast)).